We begin with the raw amino-acid sequence, 215 residues long: Holliday junction branch migration complex subunit RuvA (215 aa).

The segment at 1-67 is domain I; sequence MIGWLQGERI…DDGSTLFGFC (67 aa). The domain II stretch occupies residues 68-146; it reads DQQERDLFRT…NWAPLQEPSL (79 aa). The segment at 147 to 158 is flexible linker; the sequence is SLVDRSDVKAIP. The domain III stretch occupies residues 159-215; sequence LGEPCLRDLQITLETLGYEDLEIRRAMRAVASGPDVPAEDDGDAWLRASLKWLSQSA.

This sequence belongs to the RuvA family. As to quaternary structure, homotetramer. Forms an RuvA(8)-RuvB(12)-Holliday junction (HJ) complex. HJ DNA is sandwiched between 2 RuvA tetramers; dsDNA enters through RuvA and exits via RuvB. An RuvB hexamer assembles on each DNA strand where it exits the tetramer. Each RuvB hexamer is contacted by two RuvA subunits (via domain III) on 2 adjacent RuvB subunits; this complex drives branch migration. In the full resolvosome a probable DNA-RuvA(4)-RuvB(12)-RuvC(2) complex forms which resolves the HJ.

It localises to the cytoplasm. The RuvA-RuvB-RuvC complex processes Holliday junction (HJ) DNA during genetic recombination and DNA repair, while the RuvA-RuvB complex plays an important role in the rescue of blocked DNA replication forks via replication fork reversal (RFR). RuvA specifically binds to HJ cruciform DNA, conferring on it an open structure. The RuvB hexamer acts as an ATP-dependent pump, pulling dsDNA into and through the RuvAB complex. HJ branch migration allows RuvC to scan DNA until it finds its consensus sequence, where it cleaves and resolves the cruciform DNA. The sequence is that of Holliday junction branch migration complex subunit RuvA from Synechococcus sp. (strain WH7803).